The primary structure comprises 556 residues: MSSTTAGLIFLAVLVAALVVVHVPLGDYMFRVYTTDRDLAAERTIYRLIGVDARSEQTWGAYARGVLAFSSVSIIFLFVLQLVQGKLPLHLHDPATKMTPSLAWNTAVSFVTNTNWQAYSGETTQGHLVQMAGLAVQNFVSAAVGMAVAVALVRGFARRRTGELGNFWVDLVRGTLRILLPISIVGAVLLVAGGAIQNFHLHDQVVTTLGGTAQTIPGGPVASQEVIKELGTNGGGFYNANSAHPFENPTAWTNWLEIFLILVIGFSLPRTFGRMVGNPKQGYAIASVMASLYLLSTGFMLWFQLQHHGTVPSAVGAAMEGVEQRFGVPDSGVFAAATTLTSTGAVDSAHDSLTSLGGMITMFNMQLGEVAPGGTGSGLYGMLVLAVITVFVAGLMVGRTPEYLGKKINPREIKLAASYFLVTPLIVLTGTAIAMALPGERAGMANSGPHGLSEVLYAFTSAANNNGSAFAGLSANTEWYNTALGLAMAFGRFLPIVLVLALAGSLARQGSTPDSAGTLPTHRPQFVGMVAGVTLIVVALTFLPMLALGPLAEGIH.

The next 10 helical transmembrane spans lie at 6–26 (AGLI…VPLG), 65–85 (GVLA…LVQG), 133–153 (GLAV…VALV), 176–196 (LRIL…GGAI), 249–269 (PTAW…FSLP), 283–303 (YAIA…MLWF), 378–398 (GLYG…LMVG), 419–439 (YFLV…ALPG), 483–503 (ALGL…LALA), and 526–546 (FVGM…LPML).

It belongs to the KdpA family. The system is composed of three essential subunits: KdpA, KdpB and KdpC.

Its subcellular location is the cell membrane. Part of the high-affinity ATP-driven potassium transport (or Kdp) system, which catalyzes the hydrolysis of ATP coupled with the electrogenic transport of potassium into the cytoplasm. This subunit binds the extracellular potassium ions and delivers the ions to the membrane domain of KdpB through an intramembrane tunnel. The polypeptide is Potassium-transporting ATPase potassium-binding subunit (Mycobacterium avium (strain 104)).